The chain runs to 190 residues: MSKPTREEAKEAVRTLLKFIGEDPTREGLLKTPDRVVNSYTEIFSGYGKDVAEILNTKFYDTCNFQDFILLKDIKFTSFCEHHMLPFIGTVDIAYIPDNCIVGISKLARIVNAFSKRLQIQEKMTVQIAESVQENLKPLGVAVKISALHSCMSMRGVMQDNSVMNTMHYTGIFAEQQKYRYDFLNLTAKR.

Zn(2+) contacts are provided by Cys-80, His-83, and Cys-151.

The protein belongs to the GTP cyclohydrolase I family. Toroid-shaped homodecamer, composed of two pentamers of five dimers.

The catalysed reaction is GTP + H2O = 7,8-dihydroneopterin 3'-triphosphate + formate + H(+). Its pathway is cofactor biosynthesis; 7,8-dihydroneopterin triphosphate biosynthesis; 7,8-dihydroneopterin triphosphate from GTP: step 1/1. The chain is GTP cyclohydrolase 1 from Rickettsia felis (strain ATCC VR-1525 / URRWXCal2) (Rickettsia azadi).